The primary structure comprises 801 residues: Elongation factor G, mitochondrial (801 aa).

Residues 1–24 constitute a mitochondrion transit peptide; it reads MRCPSLARLPHRAISGLTRLPVRL. Residues 99–386 form the tr-type G domain; that stretch reads SRIRNIGIAA…GVIDYLPNPS (288 aa). GTP-binding positions include 108 to 115, 184 to 188, and 238 to 241; these read AHIDSGKT, DTPGH, and NKMD.

Belongs to the TRAFAC class translation factor GTPase superfamily. Classic translation factor GTPase family. EF-G/EF-2 subfamily.

Its subcellular location is the mitochondrion. The protein operates within protein biosynthesis; polypeptide chain elongation. In terms of biological role, mitochondrial GTPase that catalyzes the GTP-dependent ribosomal translocation step during translation elongation. During this step, the ribosome changes from the pre-translocational (PRE) to the post-translocational (POST) state as the newly formed A-site-bound peptidyl-tRNA and P-site-bound deacylated tRNA move to the P and E sites, respectively. Catalyzes the coordinated movement of the two tRNA molecules, the mRNA and conformational changes in the ribosome. This Aspergillus clavatus (strain ATCC 1007 / CBS 513.65 / DSM 816 / NCTC 3887 / NRRL 1 / QM 1276 / 107) protein is Elongation factor G, mitochondrial (mef1).